Here is a 378-residue protein sequence, read N- to C-terminus: TelA-like protein SAV1406 (378 aa).

This sequence belongs to the TelA family.

The protein is TelA-like protein SAV1406 of Staphylococcus aureus (strain Mu50 / ATCC 700699).